The sequence spans 122 residues: Small ribosomal subunit protein bS6 (122 aa).

The protein belongs to the bacterial ribosomal protein bS6 family.

Its function is as follows. Binds together with bS18 to 16S ribosomal RNA. This Neisseria meningitidis serogroup B (strain ATCC BAA-335 / MC58) protein is Small ribosomal subunit protein bS6 (rpsF).